The following is a 55-amino-acid chain: uncharacterized protein (55 aa).

A helical membrane pass occupies residues Ile27–Phe47.

The protein resides in the membrane. This is an uncharacterized protein from Acheta domesticus (House cricket).